A 791-amino-acid chain; its full sequence is Pleckstrin homology domain-containing family H member 3 (791 aa).

An N-terminal signal peptide occupies residues methionine 1–threonine 18. Positions leucine 29 to threonine 41 are enriched in acidic residues. The tract at residues leucine 29–threonine 71 is disordered. At serine 30 the chain carries Phosphoserine. The segment covering valine 59–threonine 71 has biased composition (polar residues). One can recognise a PH domain in the interval aspartate 95–alanine 199. One can recognise a MyTH4 domain in the interval histidine 237–serine 399. Residues leucine 404 to serine 755 form the FERM domain. A compositionally biased stretch (low complexity) spans proline 549–leucine 559. Disordered regions lie at residues proline 549 to serine 580 and leucine 593 to serine 623. Positions alanine 594–glycine 605 are enriched in basic residues. Residue arginine 636 is modified to Omega-N-methylarginine. The disordered stretch occupies residues proline 748–aspartate 791. Over residues cysteine 754 to aspartate 791 the composition is skewed to polar residues.

This Rattus norvegicus (Rat) protein is Pleckstrin homology domain-containing family H member 3 (Plekhh3).